The following is a 205-amino-acid chain: UPF0111 protein YkaA (205 aa).

The protein belongs to the UPF0111 family.

The chain is UPF0111 protein YkaA (ykaA) from Bacillus subtilis (strain 168).